A 359-amino-acid chain; its full sequence is 3-dehydroquinate synthase (359 aa).

Residues D71–K76, G104–D108, T128–T129, K141, K150, and T168–T171 each bind NAD(+). Zn(2+)-binding residues include E183, H247, and H264.

The protein belongs to the sugar phosphate cyclases superfamily. Dehydroquinate synthase family. The cofactor is Co(2+). It depends on Zn(2+) as a cofactor. NAD(+) serves as cofactor.

Its subcellular location is the cytoplasm. It carries out the reaction 7-phospho-2-dehydro-3-deoxy-D-arabino-heptonate = 3-dehydroquinate + phosphate. It functions in the pathway metabolic intermediate biosynthesis; chorismate biosynthesis; chorismate from D-erythrose 4-phosphate and phosphoenolpyruvate: step 2/7. Catalyzes the conversion of 3-deoxy-D-arabino-heptulosonate 7-phosphate (DAHP) to dehydroquinate (DHQ). The polypeptide is 3-dehydroquinate synthase (Coxiella burnetii (strain Dugway 5J108-111)).